We begin with the raw amino-acid sequence, 294 residues long: Nucleoside-specific channel-forming protein Tsx (294 aa).

The N-terminal stretch at Met1–Ala22 is a signal peptide.

This sequence belongs to the nucleoside-specific channel-forming outer membrane porin (Tsx) (TC 1.B.10) family.

It is found in the cell outer membrane. In terms of biological role, functions as a substrate-specific channel for nucleosides and deoxynucleosides. Also functions in albicidin uptake and as receptor for colicin K. Also is a receptor for several Tsx-specific bacteriophages. This is Nucleoside-specific channel-forming protein Tsx from Klebsiella aerogenes (strain ATCC 13048 / DSM 30053 / CCUG 1429 / JCM 1235 / KCTC 2190 / NBRC 13534 / NCIMB 10102 / NCTC 10006 / CDC 819-56) (Enterobacter aerogenes).